Here is a 108-residue protein sequence, read N- to C-terminus: UPF0235 protein Rpal_0418 (108 aa).

Belongs to the UPF0235 family.

The sequence is that of UPF0235 protein Rpal_0418 from Rhodopseudomonas palustris (strain TIE-1).